Reading from the N-terminus, the 413-residue chain is Porin PorA (413 aa).

The N-terminal stretch at 1–22 (MKKVVSSLLIILGAAMLIFAIA) is a signal peptide. The disordered stretch occupies residues 265 to 288 (TKSAADSKDDKKKDGDKKDEKSPE).

The protein belongs to the PorA family.

The protein localises to the secreted. The protein resides in the cell wall. Forms water-filled channels that favor the permeation of cations. The sequence is that of Porin PorA from Corynebacterium resistens (strain DSM 45100 / JCM 12819 / GTC 2026 / SICGH 158).